The chain runs to 561 residues: NAD(P)H-quinone oxidoreductase chain 4 2 (561 aa).

14 helical membrane-spanning segments follow: residues 6–26 (FPWL…IPFI), 36–56 (WYGL…FWKY), 87–107 (LSMP…FAAW), 115–135 (LFYF…VAQD), 136–156 (LMLL…LISI), 169–189 (FLLY…GMAL), 210–230 (AFEL…LAVF), 244–264 (SAPV…YGLI), 275–295 (HVYF…YGGL), 312–332 (VAHM…GISG), 333–353 (ALLQ…LAGV), 376–396 (IFAL…MSGF), 419–439 (VTVF…LSML), and 490–510 (VAIA…PKIA).

The protein belongs to the complex I subunit 4 family.

It localises to the cellular thylakoid membrane. It carries out the reaction a plastoquinone + NADH + (n+1) H(+)(in) = a plastoquinol + NAD(+) + n H(+)(out). The enzyme catalyses a plastoquinone + NADPH + (n+1) H(+)(in) = a plastoquinol + NADP(+) + n H(+)(out). Functionally, NDH-1 shuttles electrons from NAD(P)H, via FMN and iron-sulfur (Fe-S) centers, to quinones in the respiratory chain. The immediate electron acceptor for the enzyme in this species is believed to be plastoquinone. Couples the redox reaction to proton translocation (for every two electrons transferred, four hydrogen ions are translocated across the cytoplasmic membrane), and thus conserves the redox energy in a proton gradient. This chain is NAD(P)H-quinone oxidoreductase chain 4 2, found in Trichodesmium erythraeum (strain IMS101).